Consider the following 521-residue polypeptide: MSELAAVLTRSMQASAGDLMVLDRETSLWCRHPWPEVHGLAESVCGWLLDHDRPAAVGLVGEPTVELVAAIQGAWLAGAAVSILPGPVRGANDQRWADATLTRFLGIGVRTVLSQGSYLARLRSVDTAGVTIGDLSTAAHTNRSATPVASEGPAVLQGTAGSTGAPRTAILSPGAVLSNLRGLNQRVGTDAATDVGCSWLPLYHDMGLAFVLSAALAGAPLWLAPTTAFTASPFRWLSWLSDSGATMTAAPNFAYNLIGKYARRVSEVDLGALRVTLNGGEPVDCDGLTRFAEAMAPFGFDAGAVLPSYGLAESTCAVTVPVPGIGLLADRVIDGSGAHKHAVLGNPIPGMEVRISCGDQAAGNASREIGEIEIRGASMMAGYLGQQPIDPDDWFATGDLGYLGAGGLVVCGRAKEVISIAGRNIFPTEVELVAAQVRGVREGAVVALGTGDRSTRPGLVVAAEFRGPDEANARAELIQRVASECGIVPSDVVFVSPGSLPRTSSGKLRRLAVRRSLEMAD.

Belongs to the ATP-dependent AMP-binding enzyme family.

It carries out the reaction a long-chain fatty acid + holo-[ACP] + ATP = a long-chain fatty acyl-[ACP] + AMP + diphosphate. It catalyses the reaction a medium-chain fatty acid + holo-[ACP] + ATP = a medium-chain fatty acyl-[ACP] + AMP + diphosphate. Its pathway is siderophore biosynthesis; mycobactin biosynthesis. Activates lipidic moieties required for mycobactin biosynthesis. Converts medium- to long-chain aliphatic fatty acids into acyl adenylate, which is further transferred on to the phosphopantetheine arm of the carrier protein MbtL. In Mycobacterium tuberculosis (strain CDC 1551 / Oshkosh), this protein is Medium/long-chain-fatty-acid--[acyl-carrier-protein] ligase MbtM (mbtM).